The sequence spans 85 residues: uncharacterized protein (85 aa).

This is an uncharacterized protein from Gallid herpesvirus 2 (strain Chicken/Md5/ATCC VR-987) (GaHV-2).